A 375-amino-acid polypeptide reads, in one-letter code: Fructose-1,6-bisphosphate aldolase/phosphatase (375 aa).

Asp15 (proton acceptor; for FBP phosphatase activity) is an active-site residue. Mg(2+) contacts are provided by Asp15, His22, Asp56, and Asp57. Beta-D-fructose 1,6-bisphosphate is bound at residue His22. Residue His22 coordinates dihydroxyacetone phosphate. Tyr94 is a beta-D-fructose 1,6-bisphosphate binding site. Gln98 is a binding site for Mg(2+). 107–108 contributes to the beta-D-fructose 1,6-bisphosphate binding site; it reads GN. Asp135 is a binding site for Mg(2+). Lys136 lines the beta-D-fructose 1,6-bisphosphate pocket. Lys136 lines the dihydroxyacetone phosphate pocket. Tyr237 (proton donor/acceptor; for FBP aldolase activity) is an active-site residue. Mg(2+) is bound by residues Lys240, Asp241, and Asp242. Lys240 (schiff-base intermediate with DHAP; for FBP aldolase activity) is an active-site residue. Beta-D-fructose 1,6-bisphosphate contacts are provided by residues 250-251, Arg274, Asp295, and Tyr357; that span reads QS. Positions 274 and 295 each coordinate dihydroxyacetone phosphate.

Belongs to the FBP aldolase/phosphatase family. As to quaternary structure, homooctamer; dimer of tetramers. It depends on Mg(2+) as a cofactor.

It catalyses the reaction beta-D-fructose 1,6-bisphosphate + H2O = beta-D-fructose 6-phosphate + phosphate. It carries out the reaction beta-D-fructose 1,6-bisphosphate = D-glyceraldehyde 3-phosphate + dihydroxyacetone phosphate. It participates in carbohydrate biosynthesis; gluconeogenesis. With respect to regulation, activity is enhanced by dithioerythritol, and is slightly inhibited by fructose 2,6-bisphosphate. AMP does not inhibit the enzyme activity. In terms of biological role, catalyzes two subsequent steps in gluconeogenesis: the aldol condensation of dihydroxyacetone phosphate (DHAP) and glyceraldehyde-3-phosphate (GA3P) to fructose-1,6-bisphosphate (FBP), and the dephosphorylation of FBP to fructose-6-phosphate (F6P). Does not display hydrolase activity against fructose 2,6-bisphosphate, fructose 6-phosphate, fructose 1-phosphate, glucose 6-phosphate, and glucose 1-phosphate. Exhibits only negligible activity on inositol-1-phosphate (IMP). Is essential for the growth of T.kodakaraensis under gluconeogenic conditions. The protein is Fructose-1,6-bisphosphate aldolase/phosphatase of Thermococcus kodakarensis (strain ATCC BAA-918 / JCM 12380 / KOD1) (Pyrococcus kodakaraensis (strain KOD1)).